A 224-amino-acid chain; its full sequence is Deoxyribose-phosphate aldolase (224 aa).

The Proton donor/acceptor role is filled by Asp92. Lys154 (schiff-base intermediate with acetaldehyde) is an active-site residue. Lys183 functions as the Proton donor/acceptor in the catalytic mechanism.

Belongs to the DeoC/FbaB aldolase family. DeoC type 1 subfamily.

The protein localises to the cytoplasm. It catalyses the reaction 2-deoxy-D-ribose 5-phosphate = D-glyceraldehyde 3-phosphate + acetaldehyde. It participates in carbohydrate degradation; 2-deoxy-D-ribose 1-phosphate degradation; D-glyceraldehyde 3-phosphate and acetaldehyde from 2-deoxy-alpha-D-ribose 1-phosphate: step 2/2. Functionally, catalyzes a reversible aldol reaction between acetaldehyde and D-glyceraldehyde 3-phosphate to generate 2-deoxy-D-ribose 5-phosphate. The polypeptide is Deoxyribose-phosphate aldolase (Actinobacillus succinogenes (strain ATCC 55618 / DSM 22257 / CCUG 43843 / 130Z)).